The following is an 824-amino-acid chain: MTVLQEPVQAAIWQALNHYAYRDAVFLAERLYAEVHSEEALFLLATCYYRSGKAYKAYRLLKGHSCTTPQCKYLLAKCCVDLSKLAEGEQILSGGVFNKQKSHDDIVTEFGDSACFTLSLLGHVYCKTDRLAKGSECYQKSLSLNPFLWSPFESLCEIGEKPDPDQTFKFTSLQNFSNCLPNSCTTQVPNHSLSHRQPETVLTETPQDTIELNRLNLESSNSKYSLNTDSSVSYIDSAVISPDTVPLGTGTSILSKQVQNKPKTGRSLLGGPAALSPLTPSFGILPLETPSPGDGSYLQNYTNTPPVIDVPSTGAPSKKSVARIGQTGTKSVFSQSGNSREVTPILAQTQSSGPQTSTTPQVLSPTITSPPNALPRRSSRLFTSDSSTTKENSKKLKMKFPPKIPNRKTKSKTNKGGITQPNINDSLEITKLDSSIISEGKISTITPQIQAFNLQKAAAEGLMSLLREMGKGYLALCSYNCKEAINILSHLPSHHYNTGWVLCQIGRAYFELSEYMQAERIFSEVRRIENYRVEGMEIYSTTLWHLQKDVALSVLSKDLTDMDKNSPEAWCAAGNCFSLQREHDIAIKFFQRAIQVDPNYAYAYTLLGHEFVLTEELDKALACFRNAIRVNPRHYNAWYGLGMIYYKQEKFSLAEMHFQKALDINPQSSVLLCHIGVVQHALKKSEKALDTLNKAIVIDPKNPLCKFHRASVLFANEKYKSALQELEELKQIVPKESLVYFLIGKVYKKLGQTHLALMNFSWAMDLDPKGANNQIKEAIDKRYLPDDEEPITQEEQIMGTDESQESSMTDADDTQLHAAESDEF.

4 TPR repeats span residues 6-35, 38-65, 67-99, and 115-145; these read EPVQ…YAEV, EEAL…KGHS, TTPQ…VFNK, and CFTL…LSLN. Thr-205, Thr-209, and Thr-244 each carry phosphothreonine. The interval 287–422 is disordered; that stretch reads LETPSPGDGS…TNKGGITQPN (136 aa). Phosphoserine is present on Ser-291. A Phosphothreonine modification is found at Thr-313. Polar residues predominate over residues 326-341; that stretch reads QTGTKSVFSQSGNSRE. Ser-339 is modified (phosphoserine). Residues 348 to 361 show a composition bias toward low complexity; that stretch reads QTQSSGPQTSTTPQ. Polar residues predominate over residues 362–371; sequence VLSPTITSPP. A Phosphothreonine modification is found at Thr-366. 2 positions are modified to phosphoserine: Ser-379 and Ser-386. Polar residues predominate over residues 380-390; it reads RLFTSDSSTTK. Positions 395 to 413 are enriched in basic residues; it reads KLKMKFPPKIPNRKTKSKT. At Ser-426 the chain carries Phosphoserine. A Phosphothreonine modification is found at Thr-430. Phosphoserine occurs at positions 435 and 438. At Thr-446 the chain carries Phosphothreonine. 9 TPR repeats span residues 465 to 495, 499 to 528, 533 to 563, 567 to 598, 601 to 631, 635 to 667, 670 to 702, 704 to 734, and 737 to 768; these read LLRE…PSHH, GWVL…VRRI, VEGM…TDMD, PEAW…QVDP, AYAY…IRVN, YNAW…INPQ, VLLC…DPKN, LCKF…QIVP, and SLVY…DLDP. The disordered stretch occupies residues 781–824; that stretch reads KRYLPDDEEPITQEEQIMGTDESQESSMTDADDTQLHAAESDEF. Phosphoserine is present on Ser-821.

This sequence belongs to the APC3/CDC27 family. Homodimer. The mammalian APC/C is composed at least of 14 distinct subunits ANAPC1, ANAPC2, CDC27/APC3, ANAPC4, ANAPC5, CDC16/APC6, ANAPC7, CDC23/APC8, ANAPC10, ANAPC11, CDC26/APC12, ANAPC13, ANAPC15 and ANAPC16 that assemble into a complex of at least 19 chains with a combined molecular mass of around 1.2 MDa; APC/C interacts with FZR1 and FBXO5. Interacts with RB. Interacts with FAM168B/MANI. Interacts with MCPH1. Phosphorylated. Phosphorylation on Ser-426 and Thr-446 occurs specifically during mitosis.

It is found in the nucleus. The protein localises to the cytoplasm. It localises to the cytoskeleton. The protein resides in the spindle. It functions in the pathway protein modification; protein ubiquitination. Functionally, component of the anaphase promoting complex/cyclosome (APC/C), a cell cycle-regulated E3 ubiquitin ligase that controls progression through mitosis and the G1 phase of the cell cycle. The APC/C complex acts by mediating ubiquitination and subsequent degradation of target proteins: it mainly mediates the formation of 'Lys-11'-linked polyubiquitin chains and, to a lower extent, the formation of 'Lys-48'- and 'Lys-63'-linked polyubiquitin chains. The APC/C complex catalyzes assembly of branched 'Lys-11'-/'Lys-48'-linked branched ubiquitin chains on target proteins. The protein is Cell division cycle protein 27 homolog (CDC27) of Homo sapiens (Human).